A 301-amino-acid polypeptide reads, in one-letter code: GTPase Era (301 aa).

The 170-residue stretch at 11–180 (RSGIITLVGR…KDVFFENCLN (170 aa)) folds into the Era-type G domain. Positions 19-26 (GRPNVGKS) are G1. 19-26 (GRPNVGKS) serves as a coordination point for GTP. Positions 45-49 (QTTRR) are G2. The tract at residues 66–69 (DTPG) is G3. GTP is bound by residues 66–70 (DTPGI) and 129–132 (TKID). Residues 129–132 (TKID) form a G4 region. Residues 159–161 (VSA) form a G5 region. Residues 210–286 (LEQEIPHSLL…YLRLIVKVVK (77 aa)) form the KH type-2 domain.

The protein belongs to the TRAFAC class TrmE-Era-EngA-EngB-Septin-like GTPase superfamily. Era GTPase family. In terms of assembly, monomer.

It is found in the cytoplasm. Its subcellular location is the cell membrane. In terms of biological role, an essential GTPase that binds both GDP and GTP, with rapid nucleotide exchange. Plays a role in 16S rRNA processing and 30S ribosomal subunit biogenesis and possibly also in cell cycle regulation and energy metabolism. In Tropheryma whipplei (strain TW08/27) (Whipple's bacillus), this protein is GTPase Era.